A 172-amino-acid polypeptide reads, in one-letter code: Large ribosomal subunit protein uL10 (172 aa).

This sequence belongs to the universal ribosomal protein uL10 family. In terms of assembly, part of the ribosomal stalk of the 50S ribosomal subunit. The N-terminus interacts with L11 and the large rRNA to form the base of the stalk. The C-terminus forms an elongated spine to which L12 dimers bind in a sequential fashion forming a multimeric L10(L12)X complex.

Forms part of the ribosomal stalk, playing a central role in the interaction of the ribosome with GTP-bound translation factors. The sequence is that of Large ribosomal subunit protein uL10 from Francisella tularensis subsp. holarctica (strain FTNF002-00 / FTA).